The primary structure comprises 593 residues: Aspartate--tRNA ligase (593 aa).

An L-aspartate-binding site is contributed by Glu180. The tract at residues 204 to 207 (QIFK) is aspartate. L-aspartate is bound at residue Arg226. ATP-binding positions include 226-228 (RDE) and Gln235. His453 is an L-aspartate binding site. Residue Glu487 coordinates ATP. Position 494 (Arg494) interacts with L-aspartate. 539–542 (GLDR) provides a ligand contact to ATP.

The protein belongs to the class-II aminoacyl-tRNA synthetase family. Type 1 subfamily. Homodimer.

The protein localises to the cytoplasm. The enzyme catalyses tRNA(Asp) + L-aspartate + ATP = L-aspartyl-tRNA(Asp) + AMP + diphosphate. In terms of biological role, catalyzes the attachment of L-aspartate to tRNA(Asp) in a two-step reaction: L-aspartate is first activated by ATP to form Asp-AMP and then transferred to the acceptor end of tRNA(Asp). The sequence is that of Aspartate--tRNA ligase from Clostridium botulinum (strain ATCC 19397 / Type A).